Reading from the N-terminus, the 396-residue chain is 1-deoxy-D-xylulose 5-phosphate reductoisomerase (396 aa).

Positions 13, 14, 15, 16, and 127 each coordinate NADPH. Lysine 128 is a binding site for 1-deoxy-D-xylulose 5-phosphate. Glutamate 129 contributes to the NADPH binding site. Residue aspartate 153 coordinates Mn(2+). The 1-deoxy-D-xylulose 5-phosphate site is built by serine 154, glutamate 155, serine 184, and histidine 207. Glutamate 155 provides a ligand contact to Mn(2+). Glycine 213 is an NADPH binding site. 1-deoxy-D-xylulose 5-phosphate-binding residues include serine 220, asparagine 225, lysine 226, and glutamate 229. Glutamate 229 contributes to the Mn(2+) binding site.

This sequence belongs to the DXR family. Requires Mg(2+) as cofactor. Mn(2+) serves as cofactor.

The catalysed reaction is 2-C-methyl-D-erythritol 4-phosphate + NADP(+) = 1-deoxy-D-xylulose 5-phosphate + NADPH + H(+). It participates in isoprenoid biosynthesis; isopentenyl diphosphate biosynthesis via DXP pathway; isopentenyl diphosphate from 1-deoxy-D-xylulose 5-phosphate: step 1/6. Functionally, catalyzes the NADPH-dependent rearrangement and reduction of 1-deoxy-D-xylulose-5-phosphate (DXP) to 2-C-methyl-D-erythritol 4-phosphate (MEP). The polypeptide is 1-deoxy-D-xylulose 5-phosphate reductoisomerase (Pseudomonas aeruginosa (strain UCBPP-PA14)).